A 79-amino-acid chain; its full sequence is Ornithine decarboxylase (79 aa).

Residues Ser8, Gly45, and 75 to 78 (EPGR) contribute to the pyridoxal 5'-phosphate site.

It belongs to the Orn/Lys/Arg decarboxylase class-II family. As to quaternary structure, homodimer. Only the dimer is catalytically active, as the active sites are constructed of residues from both monomers. Pyridoxal 5'-phosphate serves as cofactor.

The protein resides in the cytoplasm. It catalyses the reaction L-ornithine + H(+) = putrescine + CO2. The protein operates within amine and polyamine biosynthesis; putrescine biosynthesis via L-ornithine pathway; putrescine from L-ornithine: step 1/1. With respect to regulation, inhibited by antizyme (AZ) OAZ1 in response to polyamine levels. AZ inhibits the assembly of the functional homodimer by binding to ODC monomers and targeting them for ubiquitin-independent proteolytic destruction by the 26S proteasome. Catalyzes the first and rate-limiting step of polyamine biosynthesis that converts ornithine into putrescine, which is the precursor for the polyamines, spermidine and spermine. Polyamines are essential for cell proliferation and are implicated in cellular processes, ranging from DNA replication to apoptosis. In Paracoccidioides brasiliensis, this protein is Ornithine decarboxylase (ODC).